Reading from the N-terminus, the 428-residue chain is Pregnancy-specific beta-1-glycoprotein 3 (428 aa).

Positions 1-34 (MGPLSAPPCTQRITWKGLLLTALLLNFWNLPTTA) are cleaved as a signal peptide. The Ig-like V-type domain occupies 35-144 (QVTIEAEPTK…TGHFTFTLYL (110 aa)). N-linked (GlcNAc...) asparagine glycans are attached at residues Asn-104 and Asn-111. The Cell attachment site signature appears at 127–129 (RGD). 3 Ig-like C2-type domains span residues 147 to 234 (PKPS…VTLN), 240 to 327 (PKPY…VTLN), and 335 to 410 (PRIY…KSMT). 3 cysteine pairs are disulfide-bonded: Cys-169–Cys-217, Cys-262–Cys-310, and Cys-354–Cys-394. Residues Asn-268 and Asn-303 are each glycosylated (N-linked (GlcNAc...) asparagine).

It belongs to the immunoglobulin superfamily. CEA family.

It is found in the secreted. In Homo sapiens (Human), this protein is Pregnancy-specific beta-1-glycoprotein 3 (PSG3).